A 316-amino-acid polypeptide reads, in one-letter code: MKIVKISPRGYCYGVVDAMVIARNAALDTSLPRPIYILGMIVHNKHVTDAFEEDGIITLDGPSRLDILDKIDSGTVIFTAHGVSPEVKQRAKEKGLTTIDATCPDVTKTHDLIEAKKAEGYHVIYIGKKNHPEPEGAVGIAPDIVHLIERADDLKTLEIPTDKILVTNQTTMSQWDVQHLMEDIQKKFPTAEFHKEICLATQVRQEAVAKQADVADLTIVVGDPKSNNSNRLAQVSQEIAGTKAYRVADVSEIKLEWLQGVENVAVTAGASTPTPITKEVIAFLEQYDPMNPATWERVRKVPLQKILPRVKVKKEQ.

Cys-12 is a binding site for [4Fe-4S] cluster. His-43 and His-81 together coordinate (2E)-4-hydroxy-3-methylbut-2-enyl diphosphate. Residues His-43 and His-81 each coordinate dimethylallyl diphosphate. Positions 43 and 81 each coordinate isopentenyl diphosphate. Position 103 (Cys-103) interacts with [4Fe-4S] cluster. Position 131 (His-131) interacts with (2E)-4-hydroxy-3-methylbut-2-enyl diphosphate. Residue His-131 participates in dimethylallyl diphosphate binding. An isopentenyl diphosphate-binding site is contributed by His-131. Glu-133 (proton donor) is an active-site residue. Thr-170 is a binding site for (2E)-4-hydroxy-3-methylbut-2-enyl diphosphate. Cys-198 contacts [4Fe-4S] cluster. (2E)-4-hydroxy-3-methylbut-2-enyl diphosphate-binding residues include Ser-226, Asn-228, and Ser-271. Dimethylallyl diphosphate is bound by residues Ser-226, Asn-228, and Ser-271. Isopentenyl diphosphate contacts are provided by Ser-226, Asn-228, and Ser-271.

The protein belongs to the IspH family. Requires [4Fe-4S] cluster as cofactor.

It carries out the reaction isopentenyl diphosphate + 2 oxidized [2Fe-2S]-[ferredoxin] + H2O = (2E)-4-hydroxy-3-methylbut-2-enyl diphosphate + 2 reduced [2Fe-2S]-[ferredoxin] + 2 H(+). It catalyses the reaction dimethylallyl diphosphate + 2 oxidized [2Fe-2S]-[ferredoxin] + H2O = (2E)-4-hydroxy-3-methylbut-2-enyl diphosphate + 2 reduced [2Fe-2S]-[ferredoxin] + 2 H(+). Its pathway is isoprenoid biosynthesis; dimethylallyl diphosphate biosynthesis; dimethylallyl diphosphate from (2E)-4-hydroxy-3-methylbutenyl diphosphate: step 1/1. It functions in the pathway isoprenoid biosynthesis; isopentenyl diphosphate biosynthesis via DXP pathway; isopentenyl diphosphate from 1-deoxy-D-xylulose 5-phosphate: step 6/6. Catalyzes the conversion of 1-hydroxy-2-methyl-2-(E)-butenyl 4-diphosphate (HMBPP) into a mixture of isopentenyl diphosphate (IPP) and dimethylallyl diphosphate (DMAPP). Acts in the terminal step of the DOXP/MEP pathway for isoprenoid precursor biosynthesis. The protein is 4-hydroxy-3-methylbut-2-enyl diphosphate reductase of Bacillus anthracis (strain A0248).